Consider the following 93-residue polypeptide: Small ribosomal subunit protein uS19 (93 aa).

A disordered region spans residues 1 to 23 (MPRSLKKGPFVDDHLQKKVDAEN). A compositionally biased stretch (basic and acidic residues) spans 9–23 (PFVDDHLQKKVDAEN).

This sequence belongs to the universal ribosomal protein uS19 family.

In terms of biological role, protein S19 forms a complex with S13 that binds strongly to the 16S ribosomal RNA. The protein is Small ribosomal subunit protein uS19 of Nocardioides sp. (strain ATCC BAA-499 / JS614).